The chain runs to 327 residues: Toluene-4-monooxygenase system, hydroxylase component subunit beta (327 aa).

Belongs to the TmoE/XamoE family. As to quaternary structure, the alkene monooxygenase multicomponent enzyme system is composed of an electron transfer component and a monooxygenase component interacting with the effector protein TmoD. The electron transfer component is composed of a ferredoxin reductase (TmoF) and a ferredoxin (TmoC), and the monooxygenase component is formed by a heterohexamer (dimer of heterotrimers) of two alpha subunits (TmoA), two beta subunits (TmoE) and two gamma subunits (TmoB).

It catalyses the reaction toluene + NADH + O2 + H(+) = 4-methylphenol + NAD(+) + H2O. The protein operates within xenobiotic degradation; toluene degradation. With respect to regulation, inhibited by Zn(2+) and Cu(2+). Functionally, component of the toluene-4-monooxygenase multicomponent enzyme system which catalyzes the O2- and NADH-dependent hydroxylation of toluene to form p-cresol. Also able to convert benzene to phenol, catechol, and 1,2,3-trihydroxybenzene by successive hydroxylations. The chain is Toluene-4-monooxygenase system, hydroxylase component subunit beta from Ectopseudomonas mendocina (Pseudomonas mendocina).